A 692-amino-acid polypeptide reads, in one-letter code: Elongation factor G (692 aa).

Positions D8–L283 constitute a tr-type G domain. GTP contacts are provided by residues A17–T24, D81–H85, and N135–D138.

Belongs to the TRAFAC class translation factor GTPase superfamily. Classic translation factor GTPase family. EF-G/EF-2 subfamily.

It is found in the cytoplasm. In terms of biological role, catalyzes the GTP-dependent ribosomal translocation step during translation elongation. During this step, the ribosome changes from the pre-translocational (PRE) to the post-translocational (POST) state as the newly formed A-site-bound peptidyl-tRNA and P-site-bound deacylated tRNA move to the P and E sites, respectively. Catalyzes the coordinated movement of the two tRNA molecules, the mRNA and conformational changes in the ribosome. The chain is Elongation factor G from Trichlorobacter lovleyi (strain ATCC BAA-1151 / DSM 17278 / SZ) (Geobacter lovleyi).